Reading from the N-terminus, the 496-residue chain is MSYPQFGYPYSSTPQFLMTTNSLSTCCESSGRSLSDSAAAASAQTPVYCPVYESRLLATARHELNSAAALGVYGSPYTSTQGYGNYVTYGADASAFYSLNAFESKDGTGSAHAGIPQTAAYYPYEHTLSQYQYDRYGTMDGSTRRKNATRETTSTLKAWLQEHRKNPYPTKGEKIMLAIITKMTLTQVSTWFANARRRLKKENKMTWPPRNKCSDEKRPYDEEEEEEEEEDSQKATIKNEKKIVDEEVAREDKALDLSDLEDFDAIESESSECELKQPFHHQPQDGHQLRQRDCVNDHCKDVILKMPITPAANQELDRTKICHKPGVDQCEQEVLRGRQRGGESKACFQQQQILDSKPRIWSLAHTATSLNQTEYPSCMLKHQGLSSPSSSSSSSAVSTPVCVIDRRQDSPVTSLRNWVDGVFHDPLFRHSTLNQALTNTTVSWATTKGTLIDSGSLGRSVGNPTNAIKGQLPNIPHDTNKEFIAFQKSGSKMFCS.

Residues 141–203 (GSTRRKNATR…NARRRLKKEN (63 aa)) constitute a DNA-binding region (homeobox; TALE-type). A disordered region spans residues 203-236 (NKMTWPPRNKCSDEKRPYDEEEEEEEEEDSQKAT). The span at 221–231 (DEEEEEEEEED) shows a compositional bias: acidic residues.

This sequence belongs to the TALE/IRO homeobox family. Expressed in the neural plate in overlapping patterns with other irx members, which all share an anterior border of expression. Broadly expressed in the tailbud rhombencephalon (hindbrain). Outside the nervous system and at tailbud stages, expressed in the developing otic vesicle, branchial arches and prospective heart region.

The protein resides in the nucleus. Acts partially redundantly with other irx members in neural patterning. Required for formation of the posterior forebrain, midbrain, hindbrain, and to a lesser extent, spinal cord. Patterns the neuroectoderm in both the anterior/posterior and dorsal/ventral axes. Does not appear to play a role in pronephros kidney development. The protein is Iroquois-class homeodomain protein irx-4 of Xenopus tropicalis (Western clawed frog).